A 264-amino-acid polypeptide reads, in one-letter code: S-adenosylmethionine decarboxylase proenzyme (264 aa).

Residue S112 is the Schiff-base intermediate with substrate; via pyruvic acid of the active site. The residue at position 112 (S112) is a Pyruvic acid (Ser); by autocatalysis. H117 acts as the Proton acceptor; for processing activity in catalysis. Residue C140 is the Proton donor; for catalytic activity of the active site.

Belongs to the prokaryotic AdoMetDC family. Type 2 subfamily. Heterooctamer of four alpha and four beta chains arranged as a tetramer of alpha/beta heterodimers. Requires pyruvate as cofactor. Is synthesized initially as an inactive proenzyme. Formation of the active enzyme involves a self-maturation process in which the active site pyruvoyl group is generated from an internal serine residue via an autocatalytic post-translational modification. Two non-identical subunits are generated from the proenzyme in this reaction, and the pyruvate is formed at the N-terminus of the alpha chain, which is derived from the carboxyl end of the proenzyme. The post-translation cleavage follows an unusual pathway, termed non-hydrolytic serinolysis, in which the side chain hydroxyl group of the serine supplies its oxygen atom to form the C-terminus of the beta chain, while the remainder of the serine residue undergoes an oxidative deamination to produce ammonia and the pyruvoyl group blocking the N-terminus of the alpha chain.

It carries out the reaction S-adenosyl-L-methionine + H(+) = S-adenosyl 3-(methylsulfanyl)propylamine + CO2. Its pathway is amine and polyamine biosynthesis; S-adenosylmethioninamine biosynthesis; S-adenosylmethioninamine from S-adenosyl-L-methionine: step 1/1. In terms of biological role, catalyzes the decarboxylation of S-adenosylmethionine to S-adenosylmethioninamine (dcAdoMet), the propylamine donor required for the synthesis of the polyamines spermine and spermidine from the diamine putrescine. The chain is S-adenosylmethionine decarboxylase proenzyme from Hamiltonella defensa subsp. Acyrthosiphon pisum (strain 5AT).